The following is a 1099-amino-acid chain: Carbamoyl phosphate synthase large chain (1099 aa).

The segment at 1–402 (MPKRTDLKSV…ALQKALRSLE (402 aa)) is carboxyphosphate synthetic domain. The ATP site is built by Arg129, Arg169, Gly175, Gly176, Glu208, Ile210, Glu215, Gly241, Val242, His243, Gln285, and Glu299. The ATP-grasp 1 domain occupies 133-328 (KGVVERCGAE…IAKIATKLSL (196 aa)). Mg(2+) contacts are provided by Gln285, Glu299, and Asn301. Gln285, Glu299, and Asn301 together coordinate Mn(2+). The interval 403-546 (QKGSQLDFSH…YHYSSYDEED (144 aa)) is oligomerization domain. The interval 547 to 950 (EVALHSKPSI…AFAKSQAAAN (404 aa)) is carbamoyl phosphate synthetic domain. Residues 677 to 868 (SRVLDEAGLI…MAKAAALIGT (192 aa)) enclose the ATP-grasp 2 domain. The ATP site is built by Arg713, Arg752, Leu754, Glu759, Gly784, Ile785, His786, Ser787, Gln827, and Glu839. Gln827, Glu839, and Asn841 together coordinate Mg(2+). Mn(2+)-binding residues include Gln827, Glu839, and Asn841. One can recognise an MGS-like domain in the interval 951-1099 (NALPTEGKIF…AENLKALQNG (149 aa)). The tract at residues 951-1099 (NALPTEGKIF…AENLKALQNG (149 aa)) is allosteric domain.

This sequence belongs to the CarB family. In terms of assembly, composed of two chains; the small (or glutamine) chain promotes the hydrolysis of glutamine to ammonia, which is used by the large (or ammonia) chain to synthesize carbamoyl phosphate. Tetramer of heterodimers (alpha,beta)4. It depends on Mg(2+) as a cofactor. Requires Mn(2+) as cofactor.

The catalysed reaction is hydrogencarbonate + L-glutamine + 2 ATP + H2O = carbamoyl phosphate + L-glutamate + 2 ADP + phosphate + 2 H(+). The enzyme catalyses hydrogencarbonate + NH4(+) + 2 ATP = carbamoyl phosphate + 2 ADP + phosphate + 2 H(+). It participates in amino-acid biosynthesis; L-arginine biosynthesis; carbamoyl phosphate from bicarbonate: step 1/1. The protein operates within pyrimidine metabolism; UMP biosynthesis via de novo pathway; (S)-dihydroorotate from bicarbonate: step 1/3. Functionally, large subunit of the glutamine-dependent carbamoyl phosphate synthetase (CPSase). CPSase catalyzes the formation of carbamoyl phosphate from the ammonia moiety of glutamine, carbonate, and phosphate donated by ATP, constituting the first step of 2 biosynthetic pathways, one leading to arginine and/or urea and the other to pyrimidine nucleotides. The large subunit (synthetase) binds the substrates ammonia (free or transferred from glutamine from the small subunit), hydrogencarbonate and ATP and carries out an ATP-coupled ligase reaction, activating hydrogencarbonate by forming carboxy phosphate which reacts with ammonia to form carbamoyl phosphate. This Arthrobacter sp. (strain FB24) protein is Carbamoyl phosphate synthase large chain.